A 130-amino-acid chain; its full sequence is Large ribosomal subunit protein bL17 (130 aa).

The protein belongs to the bacterial ribosomal protein bL17 family. Part of the 50S ribosomal subunit. Contacts protein L32.

This is Large ribosomal subunit protein bL17 from Nitrosomonas eutropha (strain DSM 101675 / C91 / Nm57).